A 93-amino-acid polypeptide reads, in one-letter code: Putative nuclease p44 (93 aa).

Positions 5-84 (REDSIEKHLV…HQVIVLDSQD (80 aa)) constitute a VRR-NUC domain.

Requires Mg(2+) as cofactor.

Its function is as follows. Nuclease. The polypeptide is Putative nuclease p44 (44) (Escherichia coli (Bacteriophage APSE-1)).